Reading from the N-terminus, the 224-residue chain is Oxalate oxidase GF-3.8 (224 aa).

A signal peptide spans 1–23 (MGYSKNIASGMFAMLLLASAVLS). Cysteine 33 and cysteine 49 are joined by a disulfide. A Cupin type-1 domain is found at 63 to 214 (SKLAKAGNTS…ALRVEAGVVE (152 aa)). Asparagine 70 and asparagine 75 each carry an N-linked (GlcNAc...) asparagine glycan. Positions 111, 113, 118, and 160 each coordinate Mn(2+).

This sequence belongs to the germin family. In terms of assembly, oligomer (believed to be a pentamer but probably hexamer).

It localises to the secreted. The protein localises to the extracellular space. The protein resides in the apoplast. It is found in the cytoplasm. Its subcellular location is the cell wall. It carries out the reaction oxalate + O2 + 2 H(+) = H2O2 + 2 CO2. Functionally, produces developmental and stress-related release of hydrogen peroxide in the apoplast. May play an important role in several aspects of plant growth and defense mechanisms. The chain is Oxalate oxidase GF-3.8 from Triticum aestivum (Wheat).